An 871-amino-acid chain; its full sequence is Phosphoinositide 3-kinase regulatory subunit 5 (871 aa).

At M1 the chain carries N-acetylmethionine. A heterodimerization region spans residues 25 to 101 (SLGRRSAPWS…TPHFPPDSDL (77 aa)). Residues 381–413 (MDSGYVEDSEENSEWPQKPGSQKRQGHRRPGQK) are disordered. Residues S451 and S500 each carry the phosphoserine modification. The segment at 646–746 (PILADMLLYY…WSNLEKVCTS (101 aa)) is interaction with beta-gamma G protein dimers.

In terms of assembly, heterodimer of a catalytic subunit (PIK3CG/p120) and a regulatory (PIK3R5a/p101) subunit. Interacts with beta-gamma G protein dimers.

The protein localises to the nucleus. It localises to the cytoplasm. The protein resides in the cell membrane. With respect to regulation, greatly activated by G gamma proteins. In terms of biological role, regulatory subunit of the PI3K gamma complex. Required for recruitment of the catalytic subunit to the plasma membrane via interaction with beta-gamma G protein dimers. Required for G protein-mediated activation of PIK3CG. This Mus musculus (Mouse) protein is Phosphoinositide 3-kinase regulatory subunit 5 (Pik3r5).